Reading from the N-terminus, the 963-residue chain is Protocadherin alpha-C1 (963 aa).

The first 18 residues, 1–18 (MVGCGVAVLCLWVSCGAA), serve as a signal peptide directing secretion. Cadherin domains follow at residues 19-124 (AGQL…SPLF), 125-233 (PAGD…APVF), 234-340 (ERSV…APEL), 349-445 (VPED…TPNF), and 446-555 (PQPQ…YPVI). The Extracellular portion of the chain corresponds to 19-683 (AGQLEYSVPE…GGQLSAQNLY (665 aa)). N-linked (GlcNAc...) asparagine glycosylation occurs at Asn38. N-linked (GlcNAc...) asparagine glycosylation is found at Asn248 and Asn274. A glycan (N-linked (GlcNAc...) asparagine) is linked at Asn562. Positions 570–667 (VPRSARTGHL…NSVPQLLPDF (98 aa)) constitute a Cadherin 6 domain. A helical membrane pass occupies residues 684-704 (LVIALACISFLFLGCLLFFVC). At 705–963 (TKLHQSPGCC…GNSTTDNSDQ (259 aa)) the chain is on the cytoplasmic side. 4 PXXP repeats span residues 812 to 815 (PRQP), 845 to 848 (PGGP), 886 to 889 (PGNP), and 904 to 907 (PGSP). The interval 812-907 (PRQPNPDWRY…PDKFIIPGSP (96 aa)) is 4 X 4 AA repeats of P-X-X-P. Residues 844-963 (GPGGPDQQWP…GNSTTDNSDQ (120 aa)) form a disordered region. Basic and acidic residues predominate over residues 922-936 (DKSDFITFGKKEETK).

The protein localises to the cell membrane. Functionally, potential calcium-dependent cell-adhesion protein. May be involved in the establishment and maintenance of specific neuronal connections in the brain. The sequence is that of Protocadherin alpha-C1 (PCDHAC1) from Homo sapiens (Human).